The sequence spans 160 residues: 2-amino-4-hydroxy-6-hydroxymethyldihydropteridine pyrophosphokinase (160 aa).

Belongs to the HPPK family.

It carries out the reaction 6-hydroxymethyl-7,8-dihydropterin + ATP = (7,8-dihydropterin-6-yl)methyl diphosphate + AMP + H(+). It participates in cofactor biosynthesis; tetrahydrofolate biosynthesis; 2-amino-4-hydroxy-6-hydroxymethyl-7,8-dihydropteridine diphosphate from 7,8-dihydroneopterin triphosphate: step 4/4. Catalyzes the transfer of pyrophosphate from adenosine triphosphate (ATP) to 6-hydroxymethyl-7,8-dihydropterin, an enzymatic step in folate biosynthesis pathway. This is 2-amino-4-hydroxy-6-hydroxymethyldihydropteridine pyrophosphokinase (folK) from Aquifex aeolicus (strain VF5).